The primary structure comprises 249 residues: Aspartate/glutamate leucyltransferase (249 aa).

The protein belongs to the R-transferase family. Bpt subfamily.

Its subcellular location is the cytoplasm. The enzyme catalyses N-terminal L-glutamyl-[protein] + L-leucyl-tRNA(Leu) = N-terminal L-leucyl-L-glutamyl-[protein] + tRNA(Leu) + H(+). The catalysed reaction is N-terminal L-aspartyl-[protein] + L-leucyl-tRNA(Leu) = N-terminal L-leucyl-L-aspartyl-[protein] + tRNA(Leu) + H(+). Its function is as follows. Functions in the N-end rule pathway of protein degradation where it conjugates Leu from its aminoacyl-tRNA to the N-termini of proteins containing an N-terminal aspartate or glutamate. This Brucella melitensis biotype 2 (strain ATCC 23457) protein is Aspartate/glutamate leucyltransferase.